A 258-amino-acid chain; its full sequence is GTP cyclohydrolase FolE2 (258 aa).

The protein belongs to the GTP cyclohydrolase IV family.

The catalysed reaction is GTP + H2O = 7,8-dihydroneopterin 3'-triphosphate + formate + H(+). It functions in the pathway cofactor biosynthesis; 7,8-dihydroneopterin triphosphate biosynthesis; 7,8-dihydroneopterin triphosphate from GTP: step 1/1. In terms of biological role, converts GTP to 7,8-dihydroneopterin triphosphate. The sequence is that of GTP cyclohydrolase FolE2 from Lawsonia intracellularis (strain PHE/MN1-00).